A 269-amino-acid chain; its full sequence is tRNA uridine(34) hydroxylase (269 aa).

A Rhodanese domain is found at 122–216; sequence QDPEVVLIDV…YLEAIAPEEN (95 aa). The active-site Cysteine persulfide intermediate is C176.

The protein belongs to the TrhO family.

The catalysed reaction is uridine(34) in tRNA + AH2 + O2 = 5-hydroxyuridine(34) in tRNA + A + H2O. Functionally, catalyzes oxygen-dependent 5-hydroxyuridine (ho5U) modification at position 34 in tRNAs. This chain is tRNA uridine(34) hydroxylase, found in Synechococcus elongatus (strain ATCC 33912 / PCC 7942 / FACHB-805) (Anacystis nidulans R2).